Here is a 667-residue protein sequence, read N- to C-terminus: DNA ligase (667 aa).

NAD(+) is bound by residues 34–38, 83–84, and E112; these read DSEYD and SL. The active-site N6-AMP-lysine intermediate is K114. NAD(+) contacts are provided by R135, E169, K285, and K309. Zn(2+)-binding residues include C403, C406, C421, and C426. The BRCT domain occupies 589–667; that stretch reads ASDSYFAGKT…EARLISELKK (79 aa).

This sequence belongs to the NAD-dependent DNA ligase family. LigA subfamily. Requires Mg(2+) as cofactor. The cofactor is Mn(2+).

The enzyme catalyses NAD(+) + (deoxyribonucleotide)n-3'-hydroxyl + 5'-phospho-(deoxyribonucleotide)m = (deoxyribonucleotide)n+m + AMP + beta-nicotinamide D-nucleotide.. DNA ligase that catalyzes the formation of phosphodiester linkages between 5'-phosphoryl and 3'-hydroxyl groups in double-stranded DNA using NAD as a coenzyme and as the energy source for the reaction. It is essential for DNA replication and repair of damaged DNA. In Bacillus licheniformis (strain ATCC 14580 / DSM 13 / JCM 2505 / CCUG 7422 / NBRC 12200 / NCIMB 9375 / NCTC 10341 / NRRL NRS-1264 / Gibson 46), this protein is DNA ligase.